A 163-amino-acid polypeptide reads, in one-letter code: Small ribosomal subunit protein bS18c (163 aa).

Disordered stretches follow at residues 1–52 and 144–163; these read MYIS…IGPG and NLRN…SSDC. A compositionally biased stretch (basic residues) spans 7-48; the sequence is PFRKSKQPFRKSKQTFHKSKQPFRKFKQPFRKSKQPFRRRSR.

Belongs to the bacterial ribosomal protein bS18 family. As to quaternary structure, part of the 30S ribosomal subunit.

Its subcellular location is the plastid. The protein localises to the chloroplast. In Sorghum bicolor (Sorghum), this protein is Small ribosomal subunit protein bS18c.